The primary structure comprises 609 residues: Threonine--tRNA ligase (609 aa).

A catalytic region spans residues 215–506; that stretch reads DHRIIGNEMK…LIEHTAGELP (292 aa). Residues Cys307, His358, and His483 each contribute to the Zn(2+) site.

The protein belongs to the class-II aminoacyl-tRNA synthetase family. In terms of assembly, homodimer. Zn(2+) is required as a cofactor.

The protein resides in the cytoplasm. It catalyses the reaction tRNA(Thr) + L-threonine + ATP = L-threonyl-tRNA(Thr) + AMP + diphosphate + H(+). Functionally, catalyzes the attachment of threonine to tRNA(Thr) in a two-step reaction: L-threonine is first activated by ATP to form Thr-AMP and then transferred to the acceptor end of tRNA(Thr). Also edits incorrectly charged L-seryl-tRNA(Thr). The sequence is that of Threonine--tRNA ligase from Campylobacter hominis (strain ATCC BAA-381 / DSM 21671 / CCUG 45161 / LMG 19568 / NCTC 13146 / CH001A).